The sequence spans 195 residues: Nucleoside-triphosphatase THEP1 (195 aa).

Residues 11–18 (GRPGSGKS) and 103–110 (VVVIDEIG) contribute to the ATP site.

Belongs to the THEP1 NTPase family.

It catalyses the reaction a ribonucleoside 5'-triphosphate + H2O = a ribonucleoside 5'-diphosphate + phosphate + H(+). In terms of biological role, has nucleotide phosphatase activity towards ATP, GTP, CTP, TTP and UTP. May hydrolyze nucleoside diphosphates with lower efficiency. In Korarchaeum cryptofilum (strain OPF8), this protein is Nucleoside-triphosphatase THEP1.